The primary structure comprises 327 residues: DNA-directed RNA polymerase subunit alpha (327 aa).

The alpha N-terminal domain (alpha-NTD) stretch occupies residues 1–233 (MVREKVKVST…NLFIPFLHVE (233 aa)). The tract at residues 267–327 (LAFQYIFIDQ…KKILDILEKK (61 aa)) is alpha C-terminal domain (alpha-CTD).

Belongs to the RNA polymerase alpha chain family. In plastids the minimal PEP RNA polymerase catalytic core is composed of four subunits: alpha, beta, beta', and beta''. When a (nuclear-encoded) sigma factor is associated with the core the holoenzyme is formed, which can initiate transcription.

It localises to the plastid. The protein resides in the chloroplast. The catalysed reaction is RNA(n) + a ribonucleoside 5'-triphosphate = RNA(n+1) + diphosphate. In terms of biological role, DNA-dependent RNA polymerase catalyzes the transcription of DNA into RNA using the four ribonucleoside triphosphates as substrates. This chain is DNA-directed RNA polymerase subunit alpha, found in Lobularia maritima (Sweet alyssum).